The primary structure comprises 147 residues: Large ribosomal subunit protein bL9 (147 aa).

It belongs to the bacterial ribosomal protein bL9 family.

In terms of biological role, binds to the 23S rRNA. The protein is Large ribosomal subunit protein bL9 of Campylobacter jejuni subsp. doylei (strain ATCC BAA-1458 / RM4099 / 269.97).